The chain runs to 272 residues: Dermonecrotic toxin LvSicTox-alphaIC1biv (272 aa).

Residue histidine 5 is part of the active site. Residues glutamate 25 and aspartate 27 each contribute to the Mg(2+) site. Residue histidine 41 is the Nucleophile of the active site. 2 disulfides stabilise this stretch: cysteine 45-cysteine 51 and cysteine 47-cysteine 189. Aspartate 84 provides a ligand contact to Mg(2+).

This sequence belongs to the arthropod phospholipase D family. Class II subfamily. It depends on Mg(2+) as a cofactor. In terms of tissue distribution, expressed by the venom gland.

It localises to the secreted. It carries out the reaction an N-(acyl)-sphingosylphosphocholine = an N-(acyl)-sphingosyl-1,3-cyclic phosphate + choline. The catalysed reaction is an N-(acyl)-sphingosylphosphoethanolamine = an N-(acyl)-sphingosyl-1,3-cyclic phosphate + ethanolamine. The enzyme catalyses a 1-acyl-sn-glycero-3-phosphocholine = a 1-acyl-sn-glycero-2,3-cyclic phosphate + choline. It catalyses the reaction a 1-acyl-sn-glycero-3-phosphoethanolamine = a 1-acyl-sn-glycero-2,3-cyclic phosphate + ethanolamine. Dermonecrotic toxins cleave the phosphodiester linkage between the phosphate and headgroup of certain phospholipids (sphingolipid and lysolipid substrates), forming an alcohol (often choline) and a cyclic phosphate. This toxin acts on sphingomyelin (SM). It may also act on ceramide phosphoethanolamine (CPE), lysophosphatidylcholine (LPC) and lysophosphatidylethanolamine (LPE), but not on lysophosphatidylserine (LPS), and lysophosphatidylglycerol (LPG). It acts by transphosphatidylation, releasing exclusively cyclic phosphate products as second products. Induces dermonecrosis, hemolysis, increased vascular permeability, edema, inflammatory response, and platelet aggregation. The polypeptide is Dermonecrotic toxin LvSicTox-alphaIC1biv (Loxosceles variegata (Recluse spider)).